We begin with the raw amino-acid sequence, 251 residues long: MPRQFFVGGNFKMNGTAESITAIIKNLNEAKLDETTEVVVSPPALYLTLAQQVADEKKKVAVSSQNVFDKPNGAFTGEISVSQLQDAKIPWTIIGHSERRVILKETDEFIARKVKAAIDGGISVIFCIGETLEEREADKTIEVVTKQLNAAAKELTKEQWSKVVIAYEPVWAIGTGKVATTQQAQEVHAAIRKWLADAISPEASENTRIIYGGSVSEKNCRELAQERDVDGFLVGGASLKPAFVDIINARL.

2 residues coordinate substrate: asparagine 10 and lysine 12. The active-site Electrophile is the histidine 96. Glutamate 168 serves as the catalytic Proton acceptor.

This sequence belongs to the triosephosphate isomerase family. As to quaternary structure, homodimer.

It catalyses the reaction D-glyceraldehyde 3-phosphate = dihydroxyacetone phosphate. The protein operates within carbohydrate biosynthesis; gluconeogenesis. It functions in the pathway carbohydrate degradation; glycolysis; D-glyceraldehyde 3-phosphate from glycerone phosphate: step 1/1. The sequence is that of Triosephosphate isomerase (tpiA) from Aspergillus oryzae (strain ATCC 42149 / RIB 40) (Yellow koji mold).